The chain runs to 417 residues: Gamma-glutamyl phosphate reductase (417 aa).

The protein belongs to the gamma-glutamyl phosphate reductase family.

Its subcellular location is the cytoplasm. It catalyses the reaction L-glutamate 5-semialdehyde + phosphate + NADP(+) = L-glutamyl 5-phosphate + NADPH + H(+). The protein operates within amino-acid biosynthesis; L-proline biosynthesis; L-glutamate 5-semialdehyde from L-glutamate: step 2/2. Catalyzes the NADPH-dependent reduction of L-glutamate 5-phosphate into L-glutamate 5-semialdehyde and phosphate. The product spontaneously undergoes cyclization to form 1-pyrroline-5-carboxylate. This is Gamma-glutamyl phosphate reductase from Escherichia coli O6:K15:H31 (strain 536 / UPEC).